A 130-amino-acid polypeptide reads, in one-letter code: UPF0251 protein MmarC6_0272 (130 aa).

Belongs to the UPF0251 family.

The protein is UPF0251 protein MmarC6_0272 of Methanococcus maripaludis (strain C6 / ATCC BAA-1332).